The sequence spans 164 residues: Cyclic pyranopterin monophosphate synthase (164 aa).

Substrate is bound by residues 75 to 77 and 116 to 117; these read MCH and ME. The active site involves Asp-131.

The protein belongs to the MoaC family. As to quaternary structure, homohexamer; trimer of dimers.

The catalysed reaction is (8S)-3',8-cyclo-7,8-dihydroguanosine 5'-triphosphate = cyclic pyranopterin phosphate + diphosphate. The protein operates within cofactor biosynthesis; molybdopterin biosynthesis. Functionally, catalyzes the conversion of (8S)-3',8-cyclo-7,8-dihydroguanosine 5'-triphosphate to cyclic pyranopterin monophosphate (cPMP). The sequence is that of Cyclic pyranopterin monophosphate synthase from Staphylococcus aureus (strain MRSA252).